Here is a 436-residue protein sequence, read N- to C-terminus: 3-ketoacyl-CoA thiolase (436 aa).

Cysteine 99 (acyl-thioester intermediate) is an active-site residue. Catalysis depends on proton acceptor residues histidine 392 and cysteine 422.

This sequence belongs to the thiolase-like superfamily. Thiolase family. In terms of assembly, heterotetramer of two alpha chains (FadJ) and two beta chains (FadI).

It is found in the cytoplasm. It carries out the reaction an acyl-CoA + acetyl-CoA = a 3-oxoacyl-CoA + CoA. Its pathway is lipid metabolism; fatty acid beta-oxidation. Functionally, catalyzes the final step of fatty acid oxidation in which acetyl-CoA is released and the CoA ester of a fatty acid two carbons shorter is formed. This Escherichia coli O6:H1 (strain CFT073 / ATCC 700928 / UPEC) protein is 3-ketoacyl-CoA thiolase.